The following is a 364-amino-acid chain: DNA polymerase IV (364 aa).

The UmuC domain occupies 14 to 198 (IIHIDMDAFF…LPVEKFHGVG (185 aa)). Residues D18 and D116 each contribute to the Mg(2+) site. E117 is a catalytic residue.

It belongs to the DNA polymerase type-Y family. Monomer. Mg(2+) is required as a cofactor.

Its subcellular location is the cytoplasm. The enzyme catalyses DNA(n) + a 2'-deoxyribonucleoside 5'-triphosphate = DNA(n+1) + diphosphate. Functionally, poorly processive, error-prone DNA polymerase involved in untargeted mutagenesis. Copies undamaged DNA at stalled replication forks, which arise in vivo from mismatched or misaligned primer ends. These misaligned primers can be extended by PolIV. Exhibits no 3'-5' exonuclease (proofreading) activity. May be involved in translesional synthesis, in conjunction with the beta clamp from PolIII. The protein is DNA polymerase IV of Lactococcus lactis subsp. cremoris (strain MG1363).